Reading from the N-terminus, the 484-residue chain is Glutamate--tRNA ligase (484 aa).

The short motif at 12–22 is the 'HIGH' region element; the sequence is PSPTGEPHVGT. The 'KMSKS' region motif lies at 253-257; the sequence is KLSKR. Lysine 256 contributes to the ATP binding site.

Belongs to the class-I aminoacyl-tRNA synthetase family. Glutamate--tRNA ligase type 1 subfamily. As to quaternary structure, monomer.

The protein resides in the cytoplasm. The enzyme catalyses tRNA(Glu) + L-glutamate + ATP = L-glutamyl-tRNA(Glu) + AMP + diphosphate. Catalyzes the attachment of glutamate to tRNA(Glu) in a two-step reaction: glutamate is first activated by ATP to form Glu-AMP and then transferred to the acceptor end of tRNA(Glu). The sequence is that of Glutamate--tRNA ligase from Rhizobium leguminosarum bv. trifolii (strain WSM2304).